Reading from the N-terminus, the 260-residue chain is LIM and SH3 domain protein 1 (260 aa).

Met1 is subject to N-acetylmethionine. The region spanning 5–56 is the LIM zinc-binding domain; sequence CARCCKIVYPTEKVNCLDKFWHKACFHCETCKMTLNMKNYKGYEKKPYCNAH. Lys42 is subject to N6-acetyllysine. 2 Nebulin repeats span residues 61–95 and 97–131; these read SFTM…KNKG and GFSV…KSRM. Thr68 carries the phosphothreonine modification. An N6-methyllysine modification is found at Lys75. Ser99 is subject to Phosphoserine. Thr104 carries the post-translational modification Phosphothreonine. Lys112 is modified (N6-succinyllysine). 2 positions are modified to phosphoserine: Ser118 and Ser134. The interval 123–204 is disordered; the sequence is HEEFEKSRMG…QRSAPGGGGK (82 aa). The span at 140–155 shows a compositional bias: basic and acidic residues; it reads ECERRDPQESSYRRPQ. The segment covering 171-180 has biased composition (low complexity); it reads QQPQQQPAAQ. Residues 201-260 enclose the SH3 domain; that stretch reads GGGKRYRAVYDYSAADEDEVSFQDGDTIVNVQQIDDGWMYGTVERTGDTGMLPANYVEAI.

Interacts with F-actin. Interacts with ANKRD54. Interacts with KBTBD10. Phosphorylated.

It localises to the cytoplasm. It is found in the cell cortex. The protein resides in the cytoskeleton. Functionally, plays an important role in the regulation of dynamic actin-based, cytoskeletal activities. Agonist-dependent changes in LASP1 phosphorylation may also serve to regulate actin-associated ion transport activities, not only in the parietal cell but also in certain other F-actin-rich secretory epithelial cell types. The sequence is that of LIM and SH3 domain protein 1 (LASP1) from Bos taurus (Bovine).